A 148-amino-acid polypeptide reads, in one-letter code: UPF0260 protein PC1_1943 (148 aa).

Belongs to the UPF0260 family.

This chain is UPF0260 protein PC1_1943, found in Pectobacterium carotovorum subsp. carotovorum (strain PC1).